The chain runs to 512 residues: Lysine--tRNA ligase (512 aa).

Residues Glu422 and Glu429 each coordinate Mg(2+).

The protein belongs to the class-II aminoacyl-tRNA synthetase family. As to quaternary structure, homodimer. Requires Mg(2+) as cofactor.

Its subcellular location is the cytoplasm. It carries out the reaction tRNA(Lys) + L-lysine + ATP = L-lysyl-tRNA(Lys) + AMP + diphosphate. The polypeptide is Lysine--tRNA ligase (Paraburkholderia phymatum (strain DSM 17167 / CIP 108236 / LMG 21445 / STM815) (Burkholderia phymatum)).